The sequence spans 222 residues: Probable transaldolase (222 aa).

The Schiff-base intermediate with substrate role is filled by Lys91.

It belongs to the transaldolase family. Type 3B subfamily.

Its subcellular location is the cytoplasm. It catalyses the reaction D-sedoheptulose 7-phosphate + D-glyceraldehyde 3-phosphate = D-erythrose 4-phosphate + beta-D-fructose 6-phosphate. It functions in the pathway carbohydrate degradation; pentose phosphate pathway; D-glyceraldehyde 3-phosphate and beta-D-fructose 6-phosphate from D-ribose 5-phosphate and D-xylulose 5-phosphate (non-oxidative stage): step 2/3. Functionally, transaldolase is important for the balance of metabolites in the pentose-phosphate pathway. The sequence is that of Probable transaldolase from Chlorobaculum tepidum (strain ATCC 49652 / DSM 12025 / NBRC 103806 / TLS) (Chlorobium tepidum).